The primary structure comprises 418 residues: Serine/threonine transporter SstT (418 aa).

8 consecutive transmembrane segments (helical) span residues 21-41 (ILIG…AAIA), 49-69 (FVGA…IASI), 83-103 (ILFL…VVSF), 142-162 (ALLN…GIAL), 190-210 (FAPL…GFGA), 217-237 (LLVV…PLIV), 299-319 (MAGA…TLGI), and 331-351 (VVAA…LLLI).

This sequence belongs to the dicarboxylate/amino acid:cation symporter (DAACS) (TC 2.A.23) family.

The protein resides in the cell inner membrane. The enzyme catalyses L-serine(in) + Na(+)(in) = L-serine(out) + Na(+)(out). The catalysed reaction is L-threonine(in) + Na(+)(in) = L-threonine(out) + Na(+)(out). Its function is as follows. Involved in the import of serine and threonine into the cell, with the concomitant import of sodium (symport system). The polypeptide is Serine/threonine transporter SstT (Yersinia pestis bv. Antiqua (strain Antiqua)).